The chain runs to 79 residues: uncharacterized protein (79 aa).

This is an uncharacterized protein from Sulfolobus islandicus filamentous virus (isolate Iceland/Hveragerdi) (SIFV).